Consider the following 187-residue polypeptide: UPF0301 protein VS_2679 (187 aa).

It belongs to the UPF0301 (AlgH) family.

This Vibrio atlanticus (strain LGP32) (Vibrio splendidus (strain Mel32)) protein is UPF0301 protein VS_2679.